The chain runs to 143 residues: Large ribosomal subunit protein uL13 (143 aa).

This sequence belongs to the universal ribosomal protein uL13 family. In terms of assembly, part of the 50S ribosomal subunit.

Functionally, this protein is one of the early assembly proteins of the 50S ribosomal subunit, although it is not seen to bind rRNA by itself. It is important during the early stages of 50S assembly. In Desulfitobacterium hafniense (strain Y51), this protein is Large ribosomal subunit protein uL13.